The primary structure comprises 662 residues: A-kinase anchor protein 10, mitochondrial (662 aa).

The N-terminal 28 residues, 1-28, are a transit peptide targeting the mitochondrion; that stretch reads MRGAGPSPRHSPRALRPDPGPAMSFFRR. Disordered regions lie at residues 1–55, 178–205, and 242–280; these read MRGA…SPQK, KQSS…ALDR, and GHSA…NSCS. The segment covering 32-43 has biased composition (basic and acidic residues); that stretch reads GKEQEKTLDVKS. Ser52 and Ser189 each carry phosphoserine. RGS domains lie at 125–369 and 379–505; these read TLEQ…CKYQ and YLAD…YKYL. Polar residues predominate over residues 256 to 280; it reads GSHQIPTDSQDSSSRLAVGSRNSCS. The residue at position 281 (Ser281) is a Phosphoserine. The PKA-RII subunit binding stretch occupies residues 634 to 647; it reads LAWKIAKMIVSDVM.

As to expression, highly expressed in testis, kidney and lung, followed by brain, skeletal muscle, liver, spleen and heart. Also expressed in brown adipose tissue and pancreas.

It is found in the mitochondrion. The protein resides in the membrane. It localises to the cytoplasm. Its function is as follows. Differentially targeted protein that binds to type I and II regulatory subunits of protein kinase A and anchors them to the mitochondria or the plasma membrane. Although the physiological relevance between PKA and AKAPS with mitochondria is not fully understood, one idea is that BAD, a proapoptotic member, is phosphorylated and inactivated by mitochondria-anchored PKA. It cannot be excluded too that it may facilitate PKA as well as G protein signal transduction, by acting as an adapter for assembling multiprotein complexes. With its RGS domain, it could lead to the interaction to G-alpha proteins, providing a link between the signaling machinery and the downstream kinase. This Mus musculus (Mouse) protein is A-kinase anchor protein 10, mitochondrial (Akap10).